Reading from the N-terminus, the 2180-residue chain is DNA polymerase epsilon catalytic subunit A (2180 aa).

Zn(2+)-binding residues include C2067, C2070, C2089, and C2092. The CysA-type zinc finger occupies 2067-2092; that stretch reads CENCAYFSDLDICMSDLRSMFKCSKC. [4Fe-4S] cluster is bound by residues C2123, C2126, C2138, and C2140. Positions 2123 to 2140 match the CysB motif motif; it reads CAKCRKIKSDTMSAYCTC.

The protein belongs to the DNA polymerase type-B family. Heterotetramer. Consists of 4 subunits: POL2, DPB2, DPB3 and DPB4. The cofactor is [4Fe-4S] cluster.

The protein resides in the nucleus. The catalysed reaction is DNA(n) + a 2'-deoxyribonucleoside 5'-triphosphate = DNA(n+1) + diphosphate. In terms of biological role, DNA polymerase II participates in chromosomal DNA replication. The sequence is that of DNA polymerase epsilon catalytic subunit A (POL2) from Eremothecium gossypii (strain ATCC 10895 / CBS 109.51 / FGSC 9923 / NRRL Y-1056) (Yeast).